The primary structure comprises 449 residues: Elongation factor 1-alpha (449 aa).

The tr-type G domain occupies 5 to 230 (KVHMNLVVVG…DMLEPPVRPS (226 aa)). Residues 14-21 (GHVDAGKS) are G1. A GTP-binding site is contributed by 14–21 (GHVDAGKS). Positions 70 to 74 (GITID) are G2. Residues 91–94 (DAPG) form a G3 region. GTP is bound by residues 91 to 95 (DAPGH) and 153 to 156 (NKMD). The segment at 153–156 (NKMD) is G4. The G5 stretch occupies residues 194–196 (SGW). Glu362 carries the 5-glutamyl glycerylphosphorylethanolamine modification.

This sequence belongs to the TRAFAC class translation factor GTPase superfamily. Classic translation factor GTPase family. EF-Tu/EF-1A subfamily. Phosphatidylethanolamine (PE) is a direct precursor of the ethanolamine-phosphoglycerol (EPG) moiety.

It localises to the cytoplasm. Functionally, this protein promotes the GTP-dependent binding of aminoacyl-tRNA to the A-site of ribosomes during protein biosynthesis. The chain is Elongation factor 1-alpha (TEF1) from Trypanosoma brucei brucei.